A 478-amino-acid polypeptide reads, in one-letter code: Septin-4 (478 aa).

Disordered regions lie at residues 40–74 (DFSG…LYDD) and 87–115 (ADNQ…LDPY). Positions 95–108 (APAPLSPSARPRSP) are enriched in low complexity. 2 positions are modified to phosphoserine: Ser117 and Ser118. Residues 141–414 (KGFDFTLMVA…ENYRAQCIQS (274 aa)) enclose the Septin-type G domain. Residues 151-158 (GESGLGKS) form a G1 motif region. GTP-binding positions include 151–158 (GESGLGKS) and Thr185. The tract at residues 208–211 (DTPG) is G3 motif. Residues 289–292 (AKAD) are G4 motif. Residue 290-298 (KADTLTPPE) participates in GTP binding. A Phosphoserine modification is found at Ser325. GTP is bound by residues Gly348 and Arg363. The disordered stretch occupies residues 428 to 448 (LTRESGTDFPIPAVPPGTDPE). Ser432 is subject to Phosphoserine. At Thr434 the chain carries Phosphothreonine. The stretch at 446 to 478 (DPETEKLIREKDEELRRMQEILHKIQKQMKETY) forms a coiled coil.

Belongs to the TRAFAC class TrmE-Era-EngA-EngB-Septin-like GTPase superfamily. Septin GTPase family. As to quaternary structure, septins polymerize into heterooligomeric protein complexes that form filaments, and can associate with cellular membranes, actin filaments and microtubules. GTPase activity is required for filament formation. Interacts with SEPTIN8. Component of a septin core octameric complex consisting of SEPTIN12, SEPTIN7, SEPTIN6 and SEPTIN2 or SEPTIN4 in the order 12-7-6-2-2-6-7-12 or 12-7-6-4-4-6-7-12. Interacts with SEPTIN14 (via C-terminus). Interacts with DYRK1A. Interacts with SLC6A3/DAT and SNCA/alpha-synuclein. Interacts with STX1A; in the striatum. Interacts with XIAP (via BIR3 domain) following the induction of apoptosis. Interacts with AREL1 (via HECT domain); in the cytoplasm following induction of apoptosis. Ubiquitinated by AREL1. Post-translationally, phosphorylated by DYRK1A.

Its subcellular location is the cytoplasm. The protein localises to the cell projection. It is found in the cilium. It localises to the flagellum. The protein resides in the cytoplasmic vesicle. Its subcellular location is the secretory vesicle. The protein localises to the axon. It is found in the dendrite. It localises to the perikaryon. The protein resides in the synapse. Filament-forming cytoskeletal GTPase. Pro-apoptotic protein involved in LGR5-positive intestinal stem cell and Paneth cell expansion in the intestines, via its interaction with XIAP. May also play a role in the regulation of cell fate in the intestine. Positive regulator of apoptosis involved in hematopoietic stem cell homeostasis; via its interaction with XIAP. Negative regulator of repair and hair follicle regeneration in response to injury, due to inhibition of hair follicle stem cell proliferation, potentially via its interaction with XIAP. Plays an important role in male fertility and sperm motility. During spermiogenesis, essential for the establishment of the annulus (a fibrous ring structure connecting the midpiece and the principal piece of the sperm flagellum) which is a requisite for the structural and mechanical integrity of the sperm. Involved in the migration of cortical neurons and the formation of neuron leading processes during embryonic development. Required for dopaminergic metabolism in presynaptic autoreceptors; potentially via activity as a presynaptic scaffold protein. This is Septin-4 from Macaca fascicularis (Crab-eating macaque).